Consider the following 245-residue polypeptide: 1-(5-phosphoribosyl)-5-[(5-phosphoribosylamino)methylideneamino] imidazole-4-carboxamide isomerase (245 aa).

Residue Asp-7 is the Proton acceptor of the active site. Asp-129 functions as the Proton donor in the catalytic mechanism.

The protein belongs to the HisA/HisF family.

It localises to the cytoplasm. The enzyme catalyses 1-(5-phospho-beta-D-ribosyl)-5-[(5-phospho-beta-D-ribosylamino)methylideneamino]imidazole-4-carboxamide = 5-[(5-phospho-1-deoxy-D-ribulos-1-ylimino)methylamino]-1-(5-phospho-beta-D-ribosyl)imidazole-4-carboxamide. It functions in the pathway amino-acid biosynthesis; L-histidine biosynthesis; L-histidine from 5-phospho-alpha-D-ribose 1-diphosphate: step 4/9. This chain is 1-(5-phosphoribosyl)-5-[(5-phosphoribosylamino)methylideneamino] imidazole-4-carboxamide isomerase, found in Vibrio vulnificus (strain CMCP6).